Here is a 114-residue protein sequence, read N- to C-terminus: UPF0339 protein PM0519 (114 aa).

Tandem repeats lie at residues 11–59 (AKDG…NFEV) and 62–110 (AKND…IKDL).

This sequence belongs to the UPF0339 family. Duplicated subfamily.

This chain is UPF0339 protein PM0519, found in Pasteurella multocida (strain Pm70).